A 530-amino-acid polypeptide reads, in one-letter code: Ubiquitin carboxyl-terminal hydrolase 17-like protein 17 (530 aa).

The 296-residue stretch at 80–375 folds into the USP domain; it reads AGLQNMGNTC…QAYVLFYIQK (296 aa). The active-site Nucleophile is the Cys89. The Proton acceptor role is filled by His334. Composition is skewed to basic and acidic residues over residues 382-392 and 398-411; these read SESVSRGREPR and DTDR…LKRD. Disordered stretches follow at residues 382-411 and 477-530; these read SESV…LKRD and NHHP…LVCQ. Polar residues predominate over residues 493–505; sequence TPTHQESMNTGTL. The span at 510-524 shows a compositional bias: basic residues; sequence GRARRSKGKNKHSKR.

This sequence belongs to the peptidase C19 family. USP17 subfamily.

The protein localises to the nucleus. It is found in the endoplasmic reticulum. It carries out the reaction Thiol-dependent hydrolysis of ester, thioester, amide, peptide and isopeptide bonds formed by the C-terminal Gly of ubiquitin (a 76-residue protein attached to proteins as an intracellular targeting signal).. Its function is as follows. Deubiquitinating enzyme that removes conjugated ubiquitin from specific proteins to regulate different cellular processes that may include cell proliferation, progression through the cell cycle, apoptosis, cell migration, and the cellular response to viral infection. The polypeptide is Ubiquitin carboxyl-terminal hydrolase 17-like protein 17 (USP17L17) (Homo sapiens (Human)).